A 210-amino-acid chain; its full sequence is Imidazoleglycerol-phosphate dehydratase (210 aa).

It belongs to the imidazoleglycerol-phosphate dehydratase family.

It carries out the reaction D-erythro-1-(imidazol-4-yl)glycerol 3-phosphate = 3-(imidazol-4-yl)-2-oxopropyl phosphate + H2O. The protein operates within amino-acid biosynthesis; L-histidine biosynthesis; L-histidine from 5-phospho-alpha-D-ribose 1-diphosphate: step 6/9. This Candida glabrata (strain ATCC 2001 / BCRC 20586 / JCM 3761 / NBRC 0622 / NRRL Y-65 / CBS 138) (Yeast) protein is Imidazoleglycerol-phosphate dehydratase (HIS3).